The sequence spans 147 residues: Putative HTH-type transcriptional regulator slr0846 (147 aa).

The HTH rrf2-type domain maps to 2–130 (KLTTKSHYSV…YSITLADLYY (129 aa)).

The sequence is that of Putative HTH-type transcriptional regulator slr0846 from Synechocystis sp. (strain ATCC 27184 / PCC 6803 / Kazusa).